A 112-amino-acid polypeptide reads, in one-letter code: Ribonuclease P protein component (112 aa).

Belongs to the RnpA family. Consists of a catalytic RNA component (M1 or rnpB) and a protein subunit.

The enzyme catalyses Endonucleolytic cleavage of RNA, removing 5'-extranucleotides from tRNA precursor.. Its function is as follows. RNaseP catalyzes the removal of the 5'-leader sequence from pre-tRNA to produce the mature 5'-terminus. It can also cleave other RNA substrates such as 4.5S RNA. The protein component plays an auxiliary but essential role in vivo by binding to the 5'-leader sequence and broadening the substrate specificity of the ribozyme. The protein is Ribonuclease P protein component of Mycoplasma mobile (strain ATCC 43663 / 163K / NCTC 11711) (Mesomycoplasma mobile).